Consider the following 75-residue polypeptide: Protein myomixer (75 aa).

The Cytoplasmic portion of the chain corresponds to 1-5 (MPAVF). The helical transmembrane segment at 6 to 28 (LLLRSLVVRLFGSRLAASGVQLL) threads the bilayer. Residues 29–75 (RRILTTATGHLGTVLRNIWERISSQQSKEAILGCVLCLLNMHKKVDN) are Extracellular-facing. The AxLyCxL signature appears at 58–67 (AILGCVLCLL).

This sequence belongs to the MYMX family. As to expression, specifically expressed in the developing myotome.

It is found in the cell membrane. Functionally, myoblast-specific protein that mediates myoblast fusion, an essential step for the formation of multi-nucleated muscle fibers. Involved in membrane fusion downstream of the lipid mixing step mediated by mymk. Acts by generating membrane stresses via its extracellular C-terminus, leading to drive fusion pore formation. The protein is Protein myomixer of Danio rerio (Zebrafish).